A 425-amino-acid polypeptide reads, in one-letter code: Nuclear hormone receptor family member nhr-13 (425 aa).

Residues 5–83 constitute a DNA-binding region (nuclear receptor); the sequence is PNSCEVCSSS…IGMKPLLVKS (79 aa). NR C4-type zinc fingers lie at residues 11 to 30 and 46 to 71; these read CSSS…CKAC and CIDQ…LKKC. The disordered stretch occupies residues 108–148; it reads VKENSEEIQNDDDPQESDAEMENESTPGPSSEPSENVSAEN. Residues 113 to 130 are compositionally biased toward acidic residues; it reads EEIQNDDDPQESDAEMEN. The span at 131–142 shows a compositional bias: low complexity; sequence ESTPGPSSEPSE. Residues 147–414 form the NR LBD domain; the sequence is ENQETVTKFL…KSMISLTSFW (268 aa).

The protein belongs to the nuclear hormone receptor family. In terms of assembly, may interact with nuclear hormone receptor nhr-49.

The protein localises to the nucleus. In terms of biological role, orphan nuclear receptor. Involved in regulating fatty acid desaturase genes, acting in concert with nuclear hormone receptor nhr-49. The protein is Nuclear hormone receptor family member nhr-13 (nhr-13) of Caenorhabditis elegans.